The sequence spans 1589 residues: MDRRALKFMQKRADTESDTTTPVSTTASQGISASAILAGGTLPLKDNSNIREKPLHHNYNHNNNNSSQHSHSHQQQQQQQVGGKQLERPLKCLETLAQKAGITFDEKYDVASPPHPGIAQQQATSGTGPATGSGSVTPTSHRHGTPPTGRRQTHTPSTPNRPSAPSTPNTNCNSIARHTSLTLEKAQNPGQQVAATTTVPLQISPEQLQQFYASNPYAIQVKQEFPTHTTSGSGTELKHATNIMEVQQQLQLQQQLSEANGGGAASAGAGGAASPANSQQSQQQQHSTAISTMSPMQLAAATGGVGGDWTQGRTVQLMQPSTSFLYPQMIVSGNLLHPGGLGQQPIQVITAGKPFQGNGPQMLTTTTQNAKQMIGGQAGFAGGNYATCIPTNHNQSPQTVLFSPMNVISPQQQQNLLQSMAAAAQQQQLTQQQQQFNQQQQQQLTQQQQQLTAALAKVGVDAQGKLAQKVVQKVTTTSSAVQAATGPGSTGSTQTQQVQQVQQQQQQTTQTTQQCVQVSQSTLPVGVGGQSVQTAQLLNAGQAQQMQIPWFLQNAAGLQPFGPNQIILRNQPDGTQGMFIQQQPATQTLQTQQNQIIQCNVTQTPTKARTQLDALAPKQQQQQQQVGTTNQTQQQQLAVATAQLQQQQQQLTAAALQRPGAPVMPHNGTQVRPASSVSTQTAQNQSLLKAKMRNKQQPVRPALATLKTEIGQVAGQNKVVGHLTTVQQQQQATNLQQVVNAAGNKMVVMSTTGTPITLQNGQTLHAATAAGVDKQQQQLQLFQKQQILQQQQMLQQQIAAIQMQQQQAAVQAQQQQQQQVSQQQQVNAQQQQAVAQQQQAVAQAQQQQREQQQQVAQAQAQHQQALANATQQILQVAPNQFITSHQQQQQQQLHNQLIQQQLQQQAQAQVQAQVQAQAQQQQQQREQQQNIIQQIVVQQSGATSQQTSQQQQHHQSGQLQLSSVPFSVSSSTTPAGIATSSALQAALSASGAIFQTAKPGTCSSSSPTSSVVTITNQSSTPLVTSSTVASIQQAQTQSAQVHQHQQLISATIAGGTQQQPQGPPSLTPTTNPILAMTSMMNATVGHLSTAPPVTVSVTSTAVTSSPGQLVLLSTASSGGGGSIPATPTKETPSKGPTATLVPIGSPKTPVSGKDTCTTPKSSTPATVSASVEASSSTGEALSNGDASDRSSTPSKGATTPTSKQSNAAVQPPSSTTPNSVSGKEEPKLATCGSLTSATSTSTTTTITNGIGVARTTASTAVSTASTTTTSSGTFITSCTSTTTTTTSSISNGSKDLPKAMIKPNVLTHVIDGFIIQEANEPFPVTRQRYADKDVSDEPPKKKATMQEDIKLSGIASAPGSDMVACEQCGKMEHKAKLKRKRYCSPGCSRQAKNGIGGVGSGETNGLGTGGIVGVDAMALVDRLDEAMAEEKMQTEATPKLSESFPILGASTEVPPMSLPVQAAISAPSPLAMPLGSPLSVALPTLAPLSVVTSGAAPKSSEVNGTDRPPISSWSVDDVSNFIRELPGCQDYVDDFIQQEIDGQALLLLKEKHLVNAMGMKLGPALKIVAKVESIKEVPPPGEAKDPGAQ.

The span at Met1–Thr15 shows a compositional bias: basic and acidic residues. 5 disordered regions span residues Met1–Gln85, Lys107–Ser174, Leu252–Ile290, Leu1112–Thr1244, and Ala1260–Lys1294. Composition is skewed to low complexity over residues Asp18–Ser28, Asn60–Gln80, and Ala119–Thr139. The span at His154–Ser174 shows a compositional bias: polar residues. The segment covering Asn260 to Gly271 has biased composition (gly residues). Over residues Ala272–Gln285 the composition is skewed to low complexity. Phosphoserine is present on Ser1145. At Thr1148 the chain carries Phosphothreonine. Residues Thr1157 to Ala1180 are compositionally biased toward low complexity. Over residues Arg1189 to Ser1221 the composition is skewed to polar residues. Composition is skewed to low complexity over residues Thr1230–Thr1244 and Ala1260–Ser1290. The FCS-type zinc finger occupies Ser1356 to Arg1389. 4 residues coordinate Zn(2+): Cys1365, Cys1368, Cys1383, and Cys1387. Positions Trp1513–Val1577 constitute an SAM domain.

Component of PRC1 complex, which contains many PcG proteins like Pc, ph, Scm, Psc, Sce and also chromatin-remodeling proteins such as histone deacetylases. This complex is distinct from the Esc/E(z) complex, at least composed of esc, E(z), Su(z)12, HDAC1/Rpd3 and Caf1-55. The 2 complexes however cooperate and interact together during the first 3 hours of development to establish PcG silencing. Interacts with the SAM domain of Scm via its SAM domain in vitro. Interacts with Trl in vivo and with corto in vitro. As to expression, salivary glands.

It is found in the nucleus. Functionally, polycomb group (PcG) protein. PcG proteins act by forming multiprotein complexes, which are required to maintain the transcriptionally repressive state of homeotic genes throughout development. PcG proteins are not required to initiate repression, but to maintain it during later stages of development. Component of the PcG multiprotein PRC1 complex, a complex that acts via chromatin remodeling and modification of histones; it mediates monoubiquitination of histone H2A 'Lys-118', rendering chromatin heritably changed in its expressibility. Plays a role in regulating the expression of other pair-rule genes such as eve, ftz, and H. This Drosophila melanogaster (Fruit fly) protein is Polyhomeotic-proximal chromatin protein (ph-p).